Reading from the N-terminus, the 963-residue chain is SH3 domain-binding protein 4 (963 aa).

Residues 55–114 (GNAKEVIAIKDYCPTNFTTLKFSKGDHLYVLDTSGGEWWYAHNTTEMGYIPSSYVQPLNY) form the SH3 1 domain. Residues S131, S246, S251, S279, and S296 each carry the phosphoserine modification. The ZU5 domain maps to 317 to 454 (TNIVCKLDSS…LEPCMYVAVV (138 aa)). Phosphoserine is present on S637. The region spanning 654 to 724 (SSLKFGKLLK…HTKNVLVVGR (71 aa)) is the SH3 2 domain.

As to quaternary structure, homodimer or homooligomer. Interacts with DNM2, EPS15, clathrin, the adapter protein complex 2/AP-2 and TFRC. Interacts with the Rag GTPases RRAGA, RRAGB, RRAGC and RRAGD; the interaction is most probably direct, preferentially occurs with their inactive GDP-bound form and is negatively regulated by amino acids. In terms of assembly, (Microbial infection) Interacts with molluscum contagiosum virus protein MC159L; this interaction is important for the suppression of autophagy. Phosphorylated upon EGF stimulation. Phosphorylation prevents interaction with DNM2. As to expression, expressed in all tissues tested with higher expression in pancreas. Expressed by retinal pigment epithelial cells (at protein level).

It localises to the membrane. It is found in the clathrin-coated pit. The protein localises to the cytoplasmic vesicle. Its subcellular location is the clathrin-coated vesicle. The protein resides in the nucleus. Its function is as follows. May function in transferrin receptor internalization at the plasma membrane through a cargo-specific control of clathrin-mediated endocytosis. Alternatively, may act as a negative regulator of the amino acid-induced TOR signaling by inhibiting the formation of active Rag GTPase complexes. Preferentially binds inactive Rag GTPase complexes and prevents their interaction with the mTORC1 complex inhibiting its relocalization to lysosomes and its activation. Thereby, may indirectly regulate cell growth, proliferation and autophagy. The polypeptide is SH3 domain-binding protein 4 (SH3BP4) (Homo sapiens (Human)).